We begin with the raw amino-acid sequence, 105 residues long: Small ribosomal subunit protein bS20 (105 aa).

Belongs to the bacterial ribosomal protein bS20 family.

In terms of biological role, binds directly to 16S ribosomal RNA. This Moorella thermoacetica (strain ATCC 39073 / JCM 9320) protein is Small ribosomal subunit protein bS20.